Reading from the N-terminus, the 282-residue chain is MAGFSHLPQQMEHGLITNNGFLFCHGSHGGAATTTAPAIPEDASMETSSVVLDTSPQDKKRKPREEDTASLNSAHSKEAKENGRKRGGKKHSRDQMEEEAPQGFIHVRARRGQATDSHSLAERVRRERISERMRMLQALVPGCDKVTGKALILDEIINYVQSLQNQVEFLSMRIASLSPVLYGFGIDSDAFSDHSQKMEGMFHEAVAIPASVLNRGSSPAQSHAIMDTSNTSPTPYTLQVQGGSNNNSLSQDNGSYIMQTVGEPRQELFNQVVLNNYMCSFQ.

Residues 34-123 (TTAPAIPEDA…ATDSHSLAER (90 aa)) are disordered. The span at 45 to 55 (METSSVVLDTS) shows a compositional bias: polar residues. Over residues 75–84 (HSKEAKENGR) the composition is skewed to basic and acidic residues. The Nuclear localization signal signature appears at 109 to 116 (ARRGQATD). The tract at residues 113–126 (QATDSHSLAERVRR) is basic motif; degenerate. The 51-residue stretch at 113-163 (QATDSHSLAERVRRERISERMRMLQALVPGCDKVTGKALILDEIINYVQSL) folds into the bHLH domain. Residues 127-163 (ERISERMRMLQALVPGCDKVTGKALILDEIINYVQSL) form a helix-loop-helix motif region. The interval 219 to 251 (PAQSHAIMDTSNTSPTPYTLQVQGGSNNNSLSQ) is disordered.

The protein belongs to the bHLH protein family. Homodimer. Component of a nuclear cell elongation controlling complex made of ILI5/BUL1, LO9-177 and BC1. Interacts with ILI5/BUL1 only in the presence of LO9-177. Interacts with IBH1. Binds to LO9-177 in the nucleus. Interacts with BCL1. As to expression, preferentially present in anthers and leaves lamina joints. Expressed in seedlings, leaves sheaths, collars and panicles.

The protein localises to the nucleus. In terms of biological role, transcription activator that contributes, together with LO9-177 and ILI5/BUL1, to the promotion of leaf inclination and grain size by modulating cell elongation. Involved in the RLI1-dependent modulation of leaf inclination by promoting lamina joint cell elongation, especially in response to phosphate (Pi) availability. This Oryza sativa subsp. japonica (Rice) protein is Transcription factor BC1.